Reading from the N-terminus, the 357-residue chain is Protein RecA (357 aa).

Residue 67-74 (GPESSGKT) coordinates ATP.

The protein belongs to the RecA family.

The protein resides in the cytoplasm. Can catalyze the hydrolysis of ATP in the presence of single-stranded DNA, the ATP-dependent uptake of single-stranded DNA by duplex DNA, and the ATP-dependent hybridization of homologous single-stranded DNAs. It interacts with LexA causing its activation and leading to its autocatalytic cleavage. In Shewanella oneidensis (strain ATCC 700550 / JCM 31522 / CIP 106686 / LMG 19005 / NCIMB 14063 / MR-1), this protein is Protein RecA.